The sequence spans 697 residues: MANKREFPLEKTRNIGIVAHIDAGKTTTTERILYYTGKIHKIGETHDGASQMDWMEQEQERGITITSAATTAQWKENRINIIDTPGHVDFTVEVERSLRVLDGAVVVLDAQSGVEPQTENVWRQATTYGVPRIVFVNKMDKIGANFDYSVSTIKDRLQANPLPVQMPIGAEDSFEGVIDLIEMKADLYDEDELGSKWDTVDVPDEYKEDAQARRDEMIEALADVNEDIMDKYLEGEEISNDEIRAAIRQATLNLDVFPVFAGSAFKNKGVQMMLDGVNDYLPSPLDVKPYKATDPETGEEIELKADDSAPFAGLAFKIATDPFVGRLTFFRVYRGTLEAGSYVLNATKGKRERVGRLLQMHSNHRNEIPEVFSGDIAAAIGLKNTTTGDSLTDPKTPLILESMEFPDPVIQVSVEPKSKADQDKMDVALQKLAEEDPTFKAETNPETGETLIAGMGELHLDIIVDRMKREFNVEATVGEPQVAYRETFTKQVSAQGKFVRQSGGKGQYGDVWIEFTPNEEGKGFEFEDAIVGGVVPREYIPSVEQGLKEAMQNGVLAGYPLIDVKAKLYDGSYHDVDSSEAAFKVAASLALRNAAPKGGAVILEPIMKVEIIAPEDNLGDVMGHVTARRGRVEGMEARGNAQVVNAFVPLAEMFGYATVLRSATQGRGTFTMTMDHYEPVPKSIQDEIIKKNGGNAE.

In terms of domain architecture, tr-type G spans 10-285 (EKTRNIGIVA…GVNDYLPSPL (276 aa)). GTP contacts are provided by residues 19–26 (AHIDAGKT), 83–87 (DTPGH), and 137–140 (NKMD).

It belongs to the TRAFAC class translation factor GTPase superfamily. Classic translation factor GTPase family. EF-G/EF-2 subfamily.

The protein resides in the cytoplasm. Its function is as follows. Catalyzes the GTP-dependent ribosomal translocation step during translation elongation. During this step, the ribosome changes from the pre-translocational (PRE) to the post-translocational (POST) state as the newly formed A-site-bound peptidyl-tRNA and P-site-bound deacylated tRNA move to the P and E sites, respectively. Catalyzes the coordinated movement of the two tRNA molecules, the mRNA and conformational changes in the ribosome. This chain is Elongation factor G, found in Ligilactobacillus salivarius (strain UCC118) (Lactobacillus salivarius).